The primary structure comprises 284 residues: Putative ABC transporter ATP-binding protein tll2439 (284 aa).

Residues 6–242 (LEFHQVGFRY…WPTFAPELGT (237 aa)) form the ABC transporter domain. 40 to 47 (GLNGSGKS) provides a ligand contact to ATP.

This sequence belongs to the ABC transporter superfamily.

It localises to the cell inner membrane. Probably part of an ABC transporter complex. Responsible for energy coupling to the transport system. The sequence is that of Putative ABC transporter ATP-binding protein tll2439 from Thermosynechococcus vestitus (strain NIES-2133 / IAM M-273 / BP-1).